The chain runs to 297 residues: Ribosomal RNA small subunit methyltransferase A (297 aa).

Residues Asn-31, Leu-33, Gly-58, Glu-79, Asp-104, and Asn-129 each contribute to the S-adenosyl-L-methionine site.

Belongs to the class I-like SAM-binding methyltransferase superfamily. rRNA adenine N(6)-methyltransferase family. RsmA subfamily.

It localises to the cytoplasm. The enzyme catalyses adenosine(1518)/adenosine(1519) in 16S rRNA + 4 S-adenosyl-L-methionine = N(6)-dimethyladenosine(1518)/N(6)-dimethyladenosine(1519) in 16S rRNA + 4 S-adenosyl-L-homocysteine + 4 H(+). Its function is as follows. Specifically dimethylates two adjacent adenosines (A1518 and A1519) in the loop of a conserved hairpin near the 3'-end of 16S rRNA in the 30S particle. May play a critical role in biogenesis of 30S subunits. The protein is Ribosomal RNA small subunit methyltransferase A of Staphylococcus aureus (strain bovine RF122 / ET3-1).